The primary structure comprises 231 residues: Ion-translocating oxidoreductase complex subunit E (231 aa).

A run of 6 helical transmembrane segments spans residues 18 to 38 (ALVQ…ATNA), 39 to 59 (LGLG…ISTL), 63 to 83 (TPAE…VSAV), 86 to 106 (LINA…PLIV), 125 to 145 (ALSA…MFVL), and 182 to 202 (PFLL…MLAG).

This sequence belongs to the NqrDE/RnfAE family. As to quaternary structure, the complex is composed of six subunits: RsxA, RsxB, RsxC, RsxD, RsxE and RsxG.

The protein resides in the cell inner membrane. Functionally, part of a membrane-bound complex that couples electron transfer with translocation of ions across the membrane. Required to maintain the reduced state of SoxR. This chain is Ion-translocating oxidoreductase complex subunit E, found in Escherichia coli O6:H1 (strain CFT073 / ATCC 700928 / UPEC).